Consider the following 303-residue polypeptide: MDDFTSISLLSLAMLVGCYVSGIIPLAVNFSEEKLKLVTVLGAGLLCGTALAVIVPEGVHALYEEALEAKHHEMGEIHKVKDAETGAEASVAHEHDHSNLHAYIGVSLVLGFVFMLLVDQIGSSHMHSADDPEAARAASSKITTTLGLVVHAAADGVALGAAASTSQTSVQLIVFVAIMLHKAPAAFGLVSFLMHAGLERNRIRKHLLVFALAAPLLSMLTYLGLSKSSKEALSEVNATGVAMLFSAGTFLYVATVHVLPEVGGMGHSHKQDLGAAKGLSRLEVCALVLGCLIPLVLSIGHQH.

The helical transmembrane segment at 7 to 27 threads the bilayer; that stretch reads ISLLSLAMLVGCYVSGIIPLA. Asn-29 carries N-linked (GlcNAc...) asparagine glycosylation. Helical transmembrane passes span 35–55, 102–122, 142–162, 172–192, and 206–226; these read LKLV…AVIV, AYIG…DQIG, ITTT…LGAA, LIVF…LVSF, and HLLV…LGLS. Asn-237 carries an N-linked (GlcNAc...) asparagine glycan. 2 helical membrane-spanning segments follow: residues 240-260 and 282-302; these read GVAM…HVLP and LEVC…IGHQ.

It belongs to the ZIP transporter (TC 2.A.5) family.

The protein resides in the golgi apparatus. It localises to the trans-Golgi network membrane. The protein localises to the cell membrane. It is found in the cytoplasm. Its subcellular location is the perinuclear region. The protein resides in the mitochondrion. It localises to the nucleus. The enzyme catalyses Zn(2+)(in) = Zn(2+)(out). Its function is as follows. Transports zinc ions across cell and organelle membranes into the cytoplasm and regulates intracellular zinc homeostasis. Participates in the zinc ions efflux out of the secretory compartments. Regulates intracellular zinc level, resulting in the enhancement of AKT1 and MAPK3/MAPK1 (Erk1/2) phosphorylation in response to the BCR activation. Also functions as a membrane androgen receptor that mediates, through a G protein, the non-classical androgen signaling pathway, characterized by the activation of MAPK3/MAPK1 (Erk1/2) and transcription factors CREB1 or ATF1. Moreover, has dual functions as a membrane-bound androgen receptor and as an androgen-dependent zinc transporter both of which are mediated through an inhibitory G protein (Gi) that mediates both MAP kinase and zinc signaling leading to the androgen-dependent apoptotic process. This Xenopus laevis (African clawed frog) protein is Zinc transporter ZIP9-B (slc39a9-b).